A 183-amino-acid polypeptide reads, in one-letter code: ATP-dependent protease subunit HslV (183 aa).

The active site involves T13. The Na(+) site is built by G168, C171, and T174.

It belongs to the peptidase T1B family. HslV subfamily. A double ring-shaped homohexamer of HslV is capped on each side by a ring-shaped HslU homohexamer. The assembly of the HslU/HslV complex is dependent on binding of ATP.

It localises to the cytoplasm. The catalysed reaction is ATP-dependent cleavage of peptide bonds with broad specificity.. Allosterically activated by HslU binding. Functionally, protease subunit of a proteasome-like degradation complex believed to be a general protein degrading machinery. The protein is ATP-dependent protease subunit HslV of Xanthomonas axonopodis pv. citri (strain 306).